The chain runs to 317 residues: Transmembrane and death domain protein 1 (317 aa).

The N-terminal stretch at 1 to 27 (MAARTLASALVLTLWVWALAPAGAVDA) is a signal peptide. Over 28–218 (MGPHAAVRLA…ERSPMGWAGP (191 aa)) the chain is Extracellular. Over residues 62-73 (ELSRLSEDRLAR) the composition is skewed to basic and acidic residues. A disordered region spans residues 62–106 (ELSRLSEDRLARPEPLNTTSGSPSRRRRREAAEDPAGRVAGPGEV). Residues 66–150 (LSEDRLARPE…DVARELGKNL (85 aa)) enclose the Death domain. N-linked (GlcNAc...) asparagine glycosylation occurs at asparagine 78. The helical transmembrane segment at 219 to 239 (LALGLLTGFVGALGTGALVVL) threads the bilayer. Over 240 to 317 (LTLWITGGDG…SWGSGALDGL (78 aa)) the chain is Cytoplasmic.

The protein resides in the membrane. In Homo sapiens (Human), this protein is Transmembrane and death domain protein 1.